The following is a 304-amino-acid chain: Acetylglutamate kinase (304 aa).

Residues G70 to G71, R92, and N185 contribute to the substrate site.

The protein belongs to the acetylglutamate kinase family. ArgB subfamily.

Its subcellular location is the cytoplasm. It catalyses the reaction N-acetyl-L-glutamate + ATP = N-acetyl-L-glutamyl 5-phosphate + ADP. The protein operates within amino-acid biosynthesis; L-arginine biosynthesis; N(2)-acetyl-L-ornithine from L-glutamate: step 2/4. In terms of biological role, catalyzes the ATP-dependent phosphorylation of N-acetyl-L-glutamate. The polypeptide is Acetylglutamate kinase (Paracoccus denitrificans (strain Pd 1222)).